A 526-amino-acid polypeptide reads, in one-letter code: Type 2 glycosyltransferase (526 aa).

Residues 25–45 (PSFDFWYSSTFWLYLFLGLWF) traverse the membrane as a helical segment. N298 and N317 each carry an N-linked (GlcNAc...) asparagine glycan. 3 helical membrane passes run 340 to 360 (FATF…SCWW), 375 to 395 (WSQF…GLFI), and 403 to 423 (FLPV…YALI). Residues N426 and N517 are each glycosylated (N-linked (GlcNAc...) asparagine).

Belongs to the GT2 glycosyltransferase family.

It localises to the cell membrane. It is found in the secreted. Its subcellular location is the cell wall. Its function is as follows. Glycosyltransferase involved in the maintenance of the outermost surface of the fungal cell wall. Likely functions in the synthesis of a currently unknown, potentially minor but widespread, extracellular or outer cell wall polysaccharide which plays a key role in facilitating many interactions between plants and fungi by enabling hyphal growth on solid matrices. The protein is Type 2 glycosyltransferase of Gibberella zeae (strain ATCC MYA-4620 / CBS 123657 / FGSC 9075 / NRRL 31084 / PH-1) (Wheat head blight fungus).